The sequence spans 368 residues: Seipin-1 (368 aa).

The next 3 helical transmembrane spans lie at 26–46 (WFMV…VVLS), 101–121 (VMVL…SLYV), and 292–312 (LCVW…LWCF). A disordered region spans residues 344–368 (MERRRRERRNQPRRRNFATTQKSYT). The segment covering 346-359 (RRRRERRNQPRRRN) has biased composition (basic residues).

This sequence belongs to the seipin family. Expressed in seeds and young seedlings. Not detected in leaves.

It is found in the endoplasmic reticulum membrane. Its function is as follows. Involved in lipid metabolism and lipid droplet (LD) morphology, number, and size. Facilitates the formation of large-sized LDs and modulates triacylglycerol accumulation. Induces probably a reorganization of the endoplasmic reticulum into LD-forming domains. In Arabidopsis thaliana (Mouse-ear cress), this protein is Seipin-1.